The chain runs to 116 residues: Beta-2-microglobulin (116 aa).

A signal peptide spans 1–19; sequence MRAIITFALFCVLYITVQA. One can recognise an Ig-like C1-type domain in the interval 24–111; that stretch reads PKVQVYSHFP…RHMSNTNAYS (88 aa). Cysteine 44 and cysteine 99 are disulfide-bonded.

The protein belongs to the beta-2-microglobulin family. As to quaternary structure, heterodimer of an alpha chain and a beta chain. Beta-2-microglobulin is the beta-chain of major histocompatibility complex class I molecules.

The protein localises to the secreted. Functionally, component of the class I major histocompatibility complex (MHC). Involved in the presentation of peptide antigens to the immune system. The polypeptide is Beta-2-microglobulin (b2m) (Labeobarbus intermedius (Lake tana barbels)).